The following is a 333-amino-acid chain: Taste receptor type 2 member 38 (333 aa).

The Extracellular portion of the chain corresponds to 1–17 (MLTLTRIHTVSYEVRST). A helical transmembrane segment spans residues 18-38 (FLFISVLEFAVGFLTNAFVFL). At 39-55 (VNFWDVVKRQPLSNSDC) the chain is on the cytoplasmic side. The helical transmembrane segment at 56 to 76 (VLLCLSISRLFLHGLLFLSAI) threads the bilayer. Residues 77-94 (QLTHFQKLSEPLNHSYQA) lie on the Extracellular side of the membrane. A helical membrane pass occupies residues 95 to 115 (INMLWMIANQANLWLAACLSL). At 116–142 (LYCSKLIRFSHTFLICLASWVSRKISQ) the chain is on the cytoplasmic side. A helical membrane pass occupies residues 143–163 (MLLGIILCSCICTVLCVWCFF). The Extracellular portion of the chain corresponds to 164 to 190 (SRPHFTVTTVLFMNNNTRLNWQIKDLN). An N-linked (GlcNAc...) asparagine glycan is attached at asparagine 178. A helical membrane pass occupies residues 191–211 (LFYSFLFCYLWSVPPFLLFLV). The Cytoplasmic segment spans residues 212 to 251 (SSGMLTVSLGRHMRTMKVYTRDSRDPSLEAHIKALKSLVS). Residues 252–272 (FFCFFVISSCAAFISVPLLIL) traverse the membrane as a helical segment. The Extracellular segment spans residues 273–276 (WRDK). A helical membrane pass occupies residues 277–297 (IGVMVCVGIMAACPSGHAAVL). The Cytoplasmic segment spans residues 298-333 (ISGNAKLRRAVTTILLWAQSSLKVRADHKADSRTLC).

The protein belongs to the G-protein coupled receptor T2R family.

The protein localises to the membrane. Functionally, receptor that may play a role in the perception of bitterness and is gustducin-linked. May play a role in sensing the chemical composition of the gastrointestinal content. The activity of this receptor may stimulate alpha gustducin, mediate PLC-beta-2 activation and lead to the gating of TRPM5. The chain is Taste receptor type 2 member 38 (TAS2R38) from Pan paniscus (Pygmy chimpanzee).